We begin with the raw amino-acid sequence, 204 residues long: Sex-determining region Y protein (204 aa).

Residues Arg-59–Lys-136 are sufficient for interaction with KPNB1. Residues Val-60–Lys-128 constitute a DNA-binding region (HMG box). Required for nuclear localization stretches follow at residues Lys-61–Lys-77 and Arg-130–Lys-136. Residues Trp-107–Pro-139 are sufficient for interaction with EP300. Lys-136 carries the N6-acetyllysine modification. A necessary for interaction with ZNF208 isoform KRAB-O region spans residues Leu-138–Ser-155. Positions Arg-175–Leu-204 are disordered. A compositionally biased stretch (basic and acidic residues) spans Gln-194–Leu-204. Positions Tyr-198–Leu-204 are necessary for interaction with SLC9A3R2.

It belongs to the SRY family. Interacts with CALM, EP300, HDAC3, KPNB1, ZNF208 isoform KRAB-O, PARP1, SLC9A3R2 and WT1. The interaction with EP300 modulates its DNA-binding activity. The interaction with KPNB1 is sensitive to dissociation by Ran in the GTP-bound form. Interaction with PARP1 impaired its DNA-binding activity. Phosphorylated on serine residues by PKA. Phosphorylation by PKA enhances its DNA-binding activity and stimulates transcription repression. Post-translationally, acetylation of Lys-136 contributes to its nuclear localization and enhances its interaction with KPNB1. Deacetylated by HDAC3. In terms of processing, poly-ADP-ribosylated by PARP1. ADP-ribosylation reduces its DNA-binding activity.

It localises to the nucleus speckle. The protein localises to the cytoplasm. It is found in the nucleus. Transcriptional regulator that controls a genetic switch in male development. It is necessary and sufficient for initiating male sex determination by directing the development of supporting cell precursors (pre-Sertoli cells) as Sertoli rather than granulosa cells. Involved in different aspects of gene regulation including promoter activation or repression. Binds to the DNA consensus sequence 5'-[AT]AACAA[AT]-3'. SRY HMG box recognizes DNA by partial intercalation in the minor groove and promotes DNA bending. Also involved in pre-mRNA splicing. In male adult brain involved in the maintenance of motor functions of dopaminergic neurons. This chain is Sex-determining region Y protein, found in Homo sapiens (Human).